Consider the following 359-residue polypeptide: MSFNISQENEFQTMYIKYFNKTYSIIEGSYNYYLFVFYIQIALIFIVLFYYLLNVYIDIKTCQFSTNTQKIHHAIYLPCVLGHVMCLIQKILLIKDSPAGDDMTNPVFYYISLFRAIFCFPGFYCLSAFVAERWFATYFLNDYEKNQRTWLVGLILWIIYSIAFISALDFHTAPSTVIHVTIFILLSCLAYLSNYLNFLLNRSYYYKSNRSDGGGYSLAQRFQISDNIRFSFFFNRLALSIAFFQISGPMCLLIDNLNISRSWKNLNTVVFDTILLLYAIVTPFVIYHHNPKYRTELQKIANSIRNIRVRTNKNQIMPMDSLDESFNSLRIQDTFGKTIVFNVTEQTSTYFEKLDRAWS.

Transmembrane regions (helical) follow at residues 33–53 (YLFV…YYLL), 74–94 (AIYL…ILLI), 111–131 (ISLF…AFVA), 150–170 (WLVG…ALDF), 180–200 (VTIF…NFLL), 237–257 (LALS…IDNL), and 266–286 (LNTV…PFVI).

The protein belongs to the nematode receptor-like protein sre family.

The protein localises to the membrane. In Caenorhabditis elegans, this protein is Serpentine receptor class epsilon-13 (sre-13).